Here is a 260-residue protein sequence, read N- to C-terminus: MILALDVGNTNITCGVFDGDRIKASFRITTKMPRTSDEYGMLLSTLLERNQVGMDDIHDAIICSVVPNIMHSLQNGLIKYFNIRPIIVEAGIKTGIRIATPNPQQIGADRIVDAVAAYELYGGPVLVIDFGTATTYDMVDENGTFMGGITAPGIRISAKALWEDAAKLPEIEIKKPDNILGKDTITSMQAGLVYGQIGQTEYIINKVKEETGMYDAKVVVTGGLGRIISNETENVDVYDPDLTLKGINLVYRKQNRKGVK.

6-13 is an ATP binding site; it reads DVGNTNIT. Position 107–110 (107–110) interacts with substrate; that stretch reads GADR. The active-site Proton acceptor is the D109. Residue D129 participates in K(+) binding. ATP is bound at residue T132. T184 serves as a coordination point for substrate.

Belongs to the type III pantothenate kinase family. Homodimer. Requires NH4(+) as cofactor. It depends on K(+) as a cofactor.

Its subcellular location is the cytoplasm. The catalysed reaction is (R)-pantothenate + ATP = (R)-4'-phosphopantothenate + ADP + H(+). It participates in cofactor biosynthesis; coenzyme A biosynthesis; CoA from (R)-pantothenate: step 1/5. In terms of biological role, catalyzes the phosphorylation of pantothenate (Pan), the first step in CoA biosynthesis. In Agathobacter rectalis (strain ATCC 33656 / DSM 3377 / JCM 17463 / KCTC 5835 / VPI 0990) (Eubacterium rectale), this protein is Type III pantothenate kinase.